A 316-amino-acid polypeptide reads, in one-letter code: 4-diphosphocytidyl-2-C-methyl-D-erythritol kinase (316 aa).

Residue lysine 23 is part of the active site. An ATP-binding site is contributed by 108-118 (PVAGGMAGGSA). Aspartate 150 is an active-site residue.

The protein belongs to the GHMP kinase family. IspE subfamily.

It carries out the reaction 4-CDP-2-C-methyl-D-erythritol + ATP = 4-CDP-2-C-methyl-D-erythritol 2-phosphate + ADP + H(+). The protein operates within isoprenoid biosynthesis; isopentenyl diphosphate biosynthesis via DXP pathway; isopentenyl diphosphate from 1-deoxy-D-xylulose 5-phosphate: step 3/6. Its function is as follows. Catalyzes the phosphorylation of the position 2 hydroxy group of 4-diphosphocytidyl-2C-methyl-D-erythritol. This is 4-diphosphocytidyl-2-C-methyl-D-erythritol kinase from Mycolicibacterium paratuberculosis (strain ATCC BAA-968 / K-10) (Mycobacterium paratuberculosis).